Here is a 279-residue protein sequence, read N- to C-terminus: Sulfur carrier protein FdhD (279 aa).

Catalysis depends on cysteine 122, which acts as the Cysteine persulfide intermediate.

Belongs to the FdhD family.

The protein resides in the cytoplasm. In terms of biological role, required for formate dehydrogenase (FDH) activity. Acts as a sulfur carrier protein that transfers sulfur from IscS to the molybdenum cofactor prior to its insertion into FDH. This is Sulfur carrier protein FdhD from Thermoplasma volcanium (strain ATCC 51530 / DSM 4299 / JCM 9571 / NBRC 15438 / GSS1).